The primary structure comprises 446 residues: MTLANVFIQDTIVAIATYLAPSSVAIIRLSGNEAIRLAKSICVKKNHWHSHRIIHTYVQDDQNQLIDEVLVLPMLAPRSYTRQDVVEIHAHGGVVVAQTILQLLINRGARLAKPGEFTLRAFINGRLTLTQAESVLELIHAPSVAMAKKALSNLRGALSTQLHQVRSELIQLLAQIEAHLDFDLDNTFVFNSFINSLTNIINQIQNLLNTPSKFYRYGIQVALLGPANAGKSTLFNALIGEERSIVTPIAGTTTDVVEATLQWQQICFRFFDTAGLKEASSEIETKAMAKAQQIAKQCDLILWIIDATSPNLPIPPYLLNSKPLLVVYNKIDVDSSDVLDHVLDHTSYPTVKVSALYATNLSQLKQLIWQQATQLFQLDGIYINERQSQLLQQAKQHLCNLQSALDEGYPLEIISWHLKNAIQCLDENDVNASTLNAIFSQFCIGK.

(6S)-5-formyl-5,6,7,8-tetrahydrofolate contacts are provided by Arg28, Glu87, and Arg126. Residues 218 to 373 (GIQVALLGPA…LKQLIWQQAT (156 aa)) form the TrmE-type G domain. A K(+)-binding site is contributed by Asn228. Residues 228–233 (NAGKST), 247–253 (TPIAGTT), and 272–275 (DTAG) each bind GTP. Residue Ser232 participates in Mg(2+) binding. K(+)-binding residues include Thr247, Ile249, and Thr252. Mg(2+) is bound at residue Thr253. Lys446 contributes to the (6S)-5-formyl-5,6,7,8-tetrahydrofolate binding site.

Belongs to the TRAFAC class TrmE-Era-EngA-EngB-Septin-like GTPase superfamily. TrmE GTPase family. It depends on K(+) as a cofactor.

Its subcellular location is the plastid. It localises to the chloroplast. Exhibits a very high intrinsic GTPase hydrolysis rate. Involved in the addition of a carboxymethylaminomethyl (cmnm) group at the wobble position (U34) of certain tRNAs, forming tRNA-cmnm(5)s(2)U34. This is Probable tRNA modification GTPase MnmE from Cyanidioschyzon merolae (strain NIES-3377 / 10D) (Unicellular red alga).